Here is a 306-residue protein sequence, read N- to C-terminus: MQRKSGCTLTIRLLERTEIRWLVKELECRPRKSLGQNFVHDANTVRRVVSTSRVNRSDFVLEVGPGFGSLTLALLDCGAAVSAIEIDPVLAGRLPQTVAEHSNNEIHRLTVCNRDVLSFRRGDLATEPTALVANLPYNVAVPALLHLLAEFPSIRTVTVMVQAEVAERLAAEPGGKDYGVPSVKLSFFGRVRRCGMVSPTVFWPIPRVYSGLVRVDRYATSPWPTDDAFRRQVFELVDIAFTQRRKTSRNAFVKWAGSSNESANRLLAASIDPARRGETLSIDDFVRLLRRSDGRDDAAVRSASAS.

Residues Asn37, Val39, Gly64, Glu85, Asp115, and Asn134 each coordinate S-adenosyl-L-methionine.

The protein belongs to the class I-like SAM-binding methyltransferase superfamily. rRNA adenine N(6)-methyltransferase family. RsmA subfamily.

It localises to the cytoplasm. It carries out the reaction adenosine(1518)/adenosine(1519) in 16S rRNA + 4 S-adenosyl-L-methionine = N(6)-dimethyladenosine(1518)/N(6)-dimethyladenosine(1519) in 16S rRNA + 4 S-adenosyl-L-homocysteine + 4 H(+). Specifically dimethylates two adjacent adenosines (A1518 and A1519) in the loop of a conserved hairpin near the 3'-end of 16S rRNA in the 30S particle. May play a critical role in biogenesis of 30S subunits. In Mycobacterium leprae (strain Br4923), this protein is Ribosomal RNA small subunit methyltransferase A.